The following is a 226-amino-acid chain: Thiamine-phosphate synthase (226 aa).

4-amino-2-methyl-5-(diphosphooxymethyl)pyrimidine contacts are provided by residues 46–50 (QFRDK) and aspartate 83. Aspartate 84 and aspartate 103 together coordinate Mg(2+). Serine 122 lines the 4-amino-2-methyl-5-(diphosphooxymethyl)pyrimidine pocket. Residue 149-151 (TQS) coordinates 2-[(2R,5Z)-2-carboxy-4-methylthiazol-5(2H)-ylidene]ethyl phosphate. Lysine 152 contributes to the 4-amino-2-methyl-5-(diphosphooxymethyl)pyrimidine binding site. Residues glycine 181 and 201–202 (IT) each bind 2-[(2R,5Z)-2-carboxy-4-methylthiazol-5(2H)-ylidene]ethyl phosphate.

It belongs to the thiamine-phosphate synthase family. Mg(2+) serves as cofactor.

The catalysed reaction is 2-[(2R,5Z)-2-carboxy-4-methylthiazol-5(2H)-ylidene]ethyl phosphate + 4-amino-2-methyl-5-(diphosphooxymethyl)pyrimidine + 2 H(+) = thiamine phosphate + CO2 + diphosphate. It carries out the reaction 2-(2-carboxy-4-methylthiazol-5-yl)ethyl phosphate + 4-amino-2-methyl-5-(diphosphooxymethyl)pyrimidine + 2 H(+) = thiamine phosphate + CO2 + diphosphate. The enzyme catalyses 4-methyl-5-(2-phosphooxyethyl)-thiazole + 4-amino-2-methyl-5-(diphosphooxymethyl)pyrimidine + H(+) = thiamine phosphate + diphosphate. It participates in cofactor biosynthesis; thiamine diphosphate biosynthesis; thiamine phosphate from 4-amino-2-methyl-5-diphosphomethylpyrimidine and 4-methyl-5-(2-phosphoethyl)-thiazole: step 1/1. Functionally, condenses 4-methyl-5-(beta-hydroxyethyl)thiazole monophosphate (THZ-P) and 2-methyl-4-amino-5-hydroxymethyl pyrimidine pyrophosphate (HMP-PP) to form thiamine monophosphate (TMP). The protein is Thiamine-phosphate synthase of Haemophilus influenzae (strain PittGG).